Here is an 835-residue protein sequence, read N- to C-terminus: Invasin (835 aa).

Positions 451–541 (VITSEVTDDG…QQATVDVRFA (91 aa)) constitute a Big-1 domain.

Belongs to the intimin/invasin family.

It localises to the cell outer membrane. Its function is as follows. Invasin is a protein that allows enteric bacteria to penetrate cultured mammalian cells. The entry of invasin in the cell is mediated by binding several beta-1 chain integrins. This chain is Invasin, found in Yersinia enterocolitica.